The chain runs to 394 residues: S-adenosylmethionine synthase (394 aa).

His16 contributes to the ATP binding site. Residue Asp18 participates in Mg(2+) binding. Position 44 (Glu44) interacts with K(+). Residues Glu57 and Gln99 each coordinate L-methionine. The interval 99–109 (QSPDIAQGVDE) is flexible loop. ATP-binding positions include 173-175 (DAK), 240-241 (RF), Asp249, 255-256 (RK), Ala272, and Lys276. Asp249 contacts L-methionine. L-methionine is bound at residue Lys280.

This sequence belongs to the AdoMet synthase family. Homotetramer; dimer of dimers. Requires Mg(2+) as cofactor. It depends on K(+) as a cofactor.

The protein resides in the cytoplasm. It carries out the reaction L-methionine + ATP + H2O = S-adenosyl-L-methionine + phosphate + diphosphate. The protein operates within amino-acid biosynthesis; S-adenosyl-L-methionine biosynthesis; S-adenosyl-L-methionine from L-methionine: step 1/1. Functionally, catalyzes the formation of S-adenosylmethionine (AdoMet) from methionine and ATP. The overall synthetic reaction is composed of two sequential steps, AdoMet formation and the subsequent tripolyphosphate hydrolysis which occurs prior to release of AdoMet from the enzyme. The chain is S-adenosylmethionine synthase from Lacticaseibacillus paracasei (strain ATCC 334 / BCRC 17002 / CCUG 31169 / CIP 107868 / KCTC 3260 / NRRL B-441) (Lactobacillus paracasei).